Consider the following 322-residue polypeptide: tRNA dimethylallyltransferase (322 aa).

19–26 contacts ATP; that stretch reads GPTASGKT. A substrate-binding site is contributed by 21-26; that stretch reads TASGKT. 3 interaction with substrate tRNA regions span residues 44–47, 168–172, and 255–260; these read DSAL, QRIQR, and RCVGYR.

This sequence belongs to the IPP transferase family. As to quaternary structure, monomer. It depends on Mg(2+) as a cofactor.

It catalyses the reaction adenosine(37) in tRNA + dimethylallyl diphosphate = N(6)-dimethylallyladenosine(37) in tRNA + diphosphate. Catalyzes the transfer of a dimethylallyl group onto the adenine at position 37 in tRNAs that read codons beginning with uridine, leading to the formation of N6-(dimethylallyl)adenosine (i(6)A). The polypeptide is tRNA dimethylallyltransferase (Cupriavidus taiwanensis (strain DSM 17343 / BCRC 17206 / CCUG 44338 / CIP 107171 / LMG 19424 / R1) (Ralstonia taiwanensis (strain LMG 19424))).